We begin with the raw amino-acid sequence, 427 residues long: 3-isopropylmalate dehydratase large subunit (427 aa).

Residues Cys308, Cys368, and Cys371 each coordinate [4Fe-4S] cluster.

Belongs to the aconitase/IPM isomerase family. LeuC type 2 subfamily. In terms of assembly, heterodimer of LeuC and LeuD. [4Fe-4S] cluster is required as a cofactor.

The catalysed reaction is (2R,3S)-3-isopropylmalate = (2S)-2-isopropylmalate. It functions in the pathway amino-acid biosynthesis; L-leucine biosynthesis; L-leucine from 3-methyl-2-oxobutanoate: step 2/4. In terms of biological role, catalyzes the isomerization between 2-isopropylmalate and 3-isopropylmalate, via the formation of 2-isopropylmaleate. This is 3-isopropylmalate dehydratase large subunit from Citrifermentans bemidjiense (strain ATCC BAA-1014 / DSM 16622 / JCM 12645 / Bem) (Geobacter bemidjiensis).